Here is a 1217-residue protein sequence, read N- to C-terminus: ATP-dependent helicase/nuclease subunit A (1217 aa).

The UvrD-like helicase ATP-binding domain maps to 10-475 (VIWTDAQWQS…IDLSQNFRSR (466 aa)). 31–38 (AAAGSGKT) lines the ATP pocket. The region spanning 476–786 (KEVLSTTNYI…RMMTIHSSKG (311 aa)) is the UvrD-like helicase C-terminal domain.

Belongs to the helicase family. AddA subfamily. Heterodimer of AddA and AddB/RexB. The cofactor is Mg(2+).

The catalysed reaction is Couples ATP hydrolysis with the unwinding of duplex DNA by translocating in the 3'-5' direction.. It catalyses the reaction ATP + H2O = ADP + phosphate + H(+). Its function is as follows. The heterodimer acts as both an ATP-dependent DNA helicase and an ATP-dependent, dual-direction single-stranded exonuclease. Recognizes the chi site generating a DNA molecule suitable for the initiation of homologous recombination. The AddA nuclease domain is required for chi fragment generation; this subunit has the helicase and 3' -&gt; 5' nuclease activities. The protein is ATP-dependent helicase/nuclease subunit A of Staphylococcus aureus (strain MRSA252).